Here is a 179-residue protein sequence, read N- to C-terminus: TM2 domain-containing protein Y66D12A.21 (179 aa).

Residues 1 to 18 (MRQLLLTLSLISVSASDA) form the signal peptide. The Extracellular segment spans residues 19 to 82 (TVKCDDLDPN…IFNRTVPSAC (64 aa)). A glycan (N-linked (GlcNAc...) asparagine) is linked at N75. The chain crosses the membrane as a helical span at residues 83–105 (HYGAHVSYTTTVLLSIFLGFFGI). Positions 88-135 (VSYTTTVLLSIFLGFFGIDRIYLGYYALGLIKMFSLGGLFVFWLVDII) constitute a TM2 domain. Residues 106–109 (DRIY) lie on the Cytoplasmic side of the membrane. A helical membrane pass occupies residues 110 to 132 (LGYYALGLIKMFSLGGLFVFWLV). Over 133-179 (DIILISLQLLGPADGTAYAMAYYGPKAQMIRFDSHTNFSFYTCDGCL) the chain is Extracellular. A glycan (N-linked (GlcNAc...) asparagine) is linked at N169.

Belongs to the TM2 family.

The protein resides in the membrane. This is TM2 domain-containing protein Y66D12A.21 from Caenorhabditis elegans.